Here is a 300-residue protein sequence, read N- to C-terminus: Zinc finger CCCH domain-containing protein 14 (300 aa).

Residues 1–38 (MEVGGRKRGKPDGANGAGGKRARESESFQTGVGSKSKP) form a disordered region. 2 consecutive C3H1-type zinc fingers follow at residues 33-61 (GSKSKPCTKFFSTSGCPFGEGCHFLHHFP) and 99-127 (TVKTRLCNKYNTAEGCKWGDKCHFAHGER). The 65-residue stretch at 170 to 234 (SATAKISVDA…DQIKNASAMV (65 aa)) folds into the KH domain. The tract at residues 243–262 (GGAPPQGKKPVGGSHRGGGP) is disordered. A C3H1-type 3 zinc finger spans residues 265–292 (NFKTKLCENFTKGSCTFGDRCHFAHGEN).

The protein is Zinc finger CCCH domain-containing protein 14 of Oryza sativa subsp. japonica (Rice).